The following is a 622-amino-acid chain: Procollagen galactosyltransferase 1 (622 aa).

The signal sequence occupies residues 1–29 (MAAAPRAGRRRGQPLLALLLLLLAPLPPG). Residues Asn-96, Asn-184, and Asn-381 are each glycosylated (N-linked (GlcNAc...) asparagine). Basic and acidic residues predominate over residues 588 to 606 (RAKSQKMREQQALSREAKN). The tract at residues 588–622 (RAKSQKMREQQALSREAKNSDVLQSPLDSAARDEL) is disordered. Positions 619 to 622 (RDEL) match the Endoplasmic reticulum retention motif motif.

It belongs to the glycosyltransferase 25 family. In terms of processing, N-glycosylated. As to expression, ubiquitous with higher levels in placenta, heart, lung and spleen.

Its subcellular location is the endoplasmic reticulum lumen. The enzyme catalyses (5R)-5-hydroxy-L-lysyl-[collagen] + UDP-alpha-D-galactose = (5R)-5-O-(beta-D-galactosyl)-5-hydroxy-L-lysyl-[collagen] + UDP + H(+). Beta-galactosyltransferase that transfers beta-galactose to hydroxylysine residues of type I collagen. By acting on collagen glycosylation, facilitates the formation of collagen triple helix. Also involved in the biosynthesis of collagen type IV. This Homo sapiens (Human) protein is Procollagen galactosyltransferase 1 (COLGALT1).